Here is a 102-residue protein sequence, read N- to C-terminus: Large ribosomal subunit protein bL21 (102 aa).

Belongs to the bacterial ribosomal protein bL21 family. In terms of assembly, part of the 50S ribosomal subunit. Contacts protein L20.

In terms of biological role, this protein binds to 23S rRNA in the presence of protein L20. The sequence is that of Large ribosomal subunit protein bL21 from Geotalea daltonii (strain DSM 22248 / JCM 15807 / FRC-32) (Geobacter daltonii).